The chain runs to 280 residues: MTERERGQGLPAEFFAVGTASFVELLSRTAPQLLPVNRVRDGSHPMPDIPHGTTIVAVRYPEGVMLAGDRRATSGNLIAQKDLEKVHRADEHSAVAMAGTVGLALEMIRLLQVELEHYEKLQSAKLSLPGKARRLGAVIRANLAHAMQGLAVVPVFAGYDLDAGVGRIYNYDITGMPQESRDFHAEGSGSPFARGALKKLYRPDLTEAEAAAVCVQALYDAAEDDAATAGPDLARRIFPTIATVTADGYRRLPEQEVAELTESVVGARRQRPDGPVAPLR.

The propeptide at 1–52 (MTERERGQGLPAEFFAVGTASFVELLSRTAPQLLPVNRVRDGSHPMPDIPHG) is removed in mature form; by autocatalysis. The active-site Nucleophile is threonine 53.

Belongs to the peptidase T1B family. As to quaternary structure, the 20S proteasome core is composed of 14 alpha and 14 beta subunits that assemble into four stacked heptameric rings, resulting in a barrel-shaped structure. The two inner rings, each composed of seven catalytic beta subunits, are sandwiched by two outer rings, each composed of seven alpha subunits. The catalytic chamber with the active sites is on the inside of the barrel. Has a gated structure, the ends of the cylinder being occluded by the N-termini of the alpha-subunits. Is capped by the proteasome-associated ATPase, ARC.

The protein localises to the cytoplasm. It catalyses the reaction Cleavage of peptide bonds with very broad specificity.. The protein operates within protein degradation; proteasomal Pup-dependent pathway. The formation of the proteasomal ATPase ARC-20S proteasome complex, likely via the docking of the C-termini of ARC into the intersubunit pockets in the alpha-rings, may trigger opening of the gate for substrate entry. Interconversion between the open-gate and close-gate conformations leads to a dynamic regulation of the 20S proteasome proteolysis activity. Its function is as follows. Component of the proteasome core, a large protease complex with broad specificity involved in protein degradation. The protein is Proteasome subunit beta 2 of Thermomonospora curvata (strain ATCC 19995 / DSM 43183 / JCM 3096 / KCTC 9072 / NBRC 15933 / NCIMB 10081 / Henssen B9).